The chain runs to 460 residues: Bifunctional protein GlmU (460 aa).

The interval 1–229 is pyrophosphorylase; the sequence is MTNYAIILAA…FNESLGVNDR (229 aa). UDP-N-acetyl-alpha-D-glucosamine-binding positions include 8–11, Lys-22, Gln-72, and 77–78; these read LAAG and GT. Mg(2+) is bound at residue Asp-102. 4 residues coordinate UDP-N-acetyl-alpha-D-glucosamine: Gly-139, Glu-154, Asn-169, and Asn-227. Asn-227 contributes to the Mg(2+) binding site. The linker stretch occupies residues 230–250; that stretch reads VALATAETVMRQRITQKHMVN. Positions 251–460 are N-acetyltransferase; sequence GVTFQNPETV…RLAHHPSRSK (210 aa). Residues Arg-332 and Lys-350 each coordinate UDP-N-acetyl-alpha-D-glucosamine. His-362 serves as the catalytic Proton acceptor. The UDP-N-acetyl-alpha-D-glucosamine site is built by Tyr-365 and Asn-376. Acetyl-CoA contacts are provided by residues Ala-379, 385–386, Ser-404, Ala-422, and Arg-439; that span reads NY.

It in the N-terminal section; belongs to the N-acetylglucosamine-1-phosphate uridyltransferase family. This sequence in the C-terminal section; belongs to the transferase hexapeptide repeat family. As to quaternary structure, homotrimer. Requires Mg(2+) as cofactor.

It is found in the cytoplasm. The enzyme catalyses alpha-D-glucosamine 1-phosphate + acetyl-CoA = N-acetyl-alpha-D-glucosamine 1-phosphate + CoA + H(+). The catalysed reaction is N-acetyl-alpha-D-glucosamine 1-phosphate + UTP + H(+) = UDP-N-acetyl-alpha-D-glucosamine + diphosphate. Its pathway is nucleotide-sugar biosynthesis; UDP-N-acetyl-alpha-D-glucosamine biosynthesis; N-acetyl-alpha-D-glucosamine 1-phosphate from alpha-D-glucosamine 6-phosphate (route II): step 2/2. The protein operates within nucleotide-sugar biosynthesis; UDP-N-acetyl-alpha-D-glucosamine biosynthesis; UDP-N-acetyl-alpha-D-glucosamine from N-acetyl-alpha-D-glucosamine 1-phosphate: step 1/1. It participates in bacterial outer membrane biogenesis; LPS lipid A biosynthesis. Catalyzes the last two sequential reactions in the de novo biosynthetic pathway for UDP-N-acetylglucosamine (UDP-GlcNAc). The C-terminal domain catalyzes the transfer of acetyl group from acetyl coenzyme A to glucosamine-1-phosphate (GlcN-1-P) to produce N-acetylglucosamine-1-phosphate (GlcNAc-1-P), which is converted into UDP-GlcNAc by the transfer of uridine 5-monophosphate (from uridine 5-triphosphate), a reaction catalyzed by the N-terminal domain. The polypeptide is Bifunctional protein GlmU (Streptococcus pyogenes serotype M6 (strain ATCC BAA-946 / MGAS10394)).